A 238-amino-acid polypeptide reads, in one-letter code: Ribonuclease PH (238 aa).

Phosphate contacts are provided by residues R86 and 124–126 (GTR).

The protein belongs to the RNase PH family. Homohexameric ring arranged as a trimer of dimers.

It catalyses the reaction tRNA(n+1) + phosphate = tRNA(n) + a ribonucleoside 5'-diphosphate. Phosphorolytic 3'-5' exoribonuclease that plays an important role in tRNA 3'-end maturation. Removes nucleotide residues following the 3'-CCA terminus of tRNAs; can also add nucleotides to the ends of RNA molecules by using nucleoside diphosphates as substrates, but this may not be physiologically important. Probably plays a role in initiation of 16S rRNA degradation (leading to ribosome degradation) during starvation. The polypeptide is Ribonuclease PH (Parvibaculum lavamentivorans (strain DS-1 / DSM 13023 / NCIMB 13966)).